The sequence spans 355 residues: UDP-N-acetylglucosamine--N-acetylmuramyl-(pentapeptide) pyrophosphoryl-undecaprenol N-acetylglucosamine transferase (355 aa).

UDP-N-acetyl-alpha-D-glucosamine contacts are provided by residues 14 to 16 (TGG), N126, R164, S190, I243, 262 to 267 (ALTVAE), and Q288.

It belongs to the glycosyltransferase 28 family. MurG subfamily.

The protein resides in the cell inner membrane. The enzyme catalyses di-trans,octa-cis-undecaprenyl diphospho-N-acetyl-alpha-D-muramoyl-L-alanyl-D-glutamyl-meso-2,6-diaminopimeloyl-D-alanyl-D-alanine + UDP-N-acetyl-alpha-D-glucosamine = di-trans,octa-cis-undecaprenyl diphospho-[N-acetyl-alpha-D-glucosaminyl-(1-&gt;4)]-N-acetyl-alpha-D-muramoyl-L-alanyl-D-glutamyl-meso-2,6-diaminopimeloyl-D-alanyl-D-alanine + UDP + H(+). Its pathway is cell wall biogenesis; peptidoglycan biosynthesis. Functionally, cell wall formation. Catalyzes the transfer of a GlcNAc subunit on undecaprenyl-pyrophosphoryl-MurNAc-pentapeptide (lipid intermediate I) to form undecaprenyl-pyrophosphoryl-MurNAc-(pentapeptide)GlcNAc (lipid intermediate II). In Psychromonas ingrahamii (strain DSM 17664 / CCUG 51855 / 37), this protein is UDP-N-acetylglucosamine--N-acetylmuramyl-(pentapeptide) pyrophosphoryl-undecaprenol N-acetylglucosamine transferase.